We begin with the raw amino-acid sequence, 218 residues long: Nuclear cap-binding protein subunit 2 (218 aa).

MRNA is bound by residues Tyr-24, Tyr-49, 118-122 (TIDLD), 129-133 (RQFGR), and 139-140 (QV). The 79-residue stretch at 46-124 (ATIYVGNLSF…REITIDLDPG (79 aa)) folds into the RRM domain. Basic residues predominate over residues 176–194 (DPHKNHHHHHHGHHHHHGQ). The interval 176–200 (DPHKNHHHHHHGHHHHHGQPHAAAA) is disordered.

Belongs to the RRM NCBP2 family. As to quaternary structure, component of the nuclear cap-binding complex (CBC).

It localises to the nucleus. Functionally, component of the cap-binding complex (CBC) involved in the nuclear export of capped U snRNAs. The CBC complex is required for efficient pre-mRNA splicing through efficient commitment complex and spliceosome formation; and involved in rRNA processing at sites A0, A1 and A2. The chain is Nuclear cap-binding protein subunit 2 (CBC2) from Eremothecium gossypii (strain ATCC 10895 / CBS 109.51 / FGSC 9923 / NRRL Y-1056) (Yeast).